Here is a 242-residue protein sequence, read N- to C-terminus: Biosynthetic peptidoglycan transglycosylase (242 aa).

A helical transmembrane segment spans residues 19–39; that stretch reads LMVVLAVFWGGGIALFSVAPV.

It belongs to the glycosyltransferase 51 family.

Its subcellular location is the cell inner membrane. The enzyme catalyses [GlcNAc-(1-&gt;4)-Mur2Ac(oyl-L-Ala-gamma-D-Glu-L-Lys-D-Ala-D-Ala)](n)-di-trans,octa-cis-undecaprenyl diphosphate + beta-D-GlcNAc-(1-&gt;4)-Mur2Ac(oyl-L-Ala-gamma-D-Glu-L-Lys-D-Ala-D-Ala)-di-trans,octa-cis-undecaprenyl diphosphate = [GlcNAc-(1-&gt;4)-Mur2Ac(oyl-L-Ala-gamma-D-Glu-L-Lys-D-Ala-D-Ala)](n+1)-di-trans,octa-cis-undecaprenyl diphosphate + di-trans,octa-cis-undecaprenyl diphosphate + H(+). The protein operates within cell wall biogenesis; peptidoglycan biosynthesis. Peptidoglycan polymerase that catalyzes glycan chain elongation from lipid-linked precursors. The protein is Biosynthetic peptidoglycan transglycosylase of Escherichia coli O139:H28 (strain E24377A / ETEC).